A 502-amino-acid chain; its full sequence is ATP synthase subunit alpha (502 aa).

Gly-169–Thr-176 is an ATP binding site.

The protein belongs to the ATPase alpha/beta chains family. F-type ATPases have 2 components, CF(1) - the catalytic core - and CF(0) - the membrane proton channel. CF(1) has five subunits: alpha(3), beta(3), gamma(1), delta(1), epsilon(1). CF(0) has three main subunits: a(1), b(2) and c(9-12). The alpha and beta chains form an alternating ring which encloses part of the gamma chain. CF(1) is attached to CF(0) by a central stalk formed by the gamma and epsilon chains, while a peripheral stalk is formed by the delta and b chains.

The protein localises to the cell inner membrane. It catalyses the reaction ATP + H2O + 4 H(+)(in) = ADP + phosphate + 5 H(+)(out). Its function is as follows. Produces ATP from ADP in the presence of a proton gradient across the membrane. The alpha chain is a regulatory subunit. In Geotalea daltonii (strain DSM 22248 / JCM 15807 / FRC-32) (Geobacter daltonii), this protein is ATP synthase subunit alpha.